The sequence spans 168 residues: Peptidoglycan-associated lipoprotein (168 aa).

Residues 1 to 21 (MEMLKFGKFAALALAMAVAVG) form the signal peptide. Cys22 carries N-palmitoyl cysteine lipidation. Cys22 carries the S-diacylglycerol cysteine lipid modification. An OmpA-like domain is found at 56 to 168 (SDEAALRAIT…AQNRRVELKK (113 aa)). A disordered region spans residues 147-168 (RPVATGHDEQSWAQNRRVELKK).

The protein belongs to the Pal lipoprotein family. The Tol-Pal system is composed of five core proteins: the inner membrane proteins TolA, TolQ and TolR, the periplasmic protein TolB and the outer membrane protein Pal. They form a network linking the inner and outer membranes and the peptidoglycan layer.

It localises to the cell outer membrane. Functionally, part of the Tol-Pal system, which plays a role in outer membrane invagination during cell division and is important for maintaining outer membrane integrity. The sequence is that of Peptidoglycan-associated lipoprotein from Pseudomonas aeruginosa (strain ATCC 15692 / DSM 22644 / CIP 104116 / JCM 14847 / LMG 12228 / 1C / PRS 101 / PAO1).